We begin with the raw amino-acid sequence, 353 residues long: MSAPLSLQTLVKKTVASTSCLSIDEHILKYCDLWWHDAPLKLYMDRGRIQIKSGFLGEDIDLCVALIIAVKENNYNLIKLFTELGANINYSLLSINTKHVRDLCRQLGAKETLEDYDIFCIFNKIMHNKTSGSVILCHEIFINNPNLENKFAAQLRRLIYKRLCGLIEIKETDELSELLVKYWYAKAVQYDYKDAICFLDEKYTDLNEWRLKCYLYYNKIYELHDIYHKEKIQIDVNEMLSLACIRDNNPLTIYYCYALGGNINQAMLTSVQYYNIGNIYFCIDLGGNAFEEGSAIARQKGYNFLSHSLVLNIYSSDASLPLNLKDPEEISSLLKNYKSKNLSIILDYSHNIL.

This sequence belongs to the asfivirus MGF 360 family.

Its function is as follows. Plays a role in virus cell tropism, and may be required for efficient virus replication in macrophages. This chain is Protein MGF 360-13L, found in African swine fever virus (isolate Tick/Malawi/Lil 20-1/1983) (ASFV).